The primary structure comprises 349 residues: Isopentenyl-diphosphate delta-isomerase (349 aa).

6–7 (RK) is a substrate binding site. FMN contacts are provided by residues 62-64 (AMT), S93, and N122. Q152 contacts substrate. Position 153 (E153) interacts with Mg(2+). Residues K184, T214, 258–259 (GG), and 280–281 (AG) each bind FMN.

This sequence belongs to the IPP isomerase type 2 family. Homooctamer. Dimer of tetramers. Requires FMN as cofactor. NADPH is required as a cofactor. Mg(2+) serves as cofactor.

It localises to the cytoplasm. The catalysed reaction is isopentenyl diphosphate = dimethylallyl diphosphate. In terms of biological role, involved in the biosynthesis of isoprenoids. Catalyzes the 1,3-allylic rearrangement of the homoallylic substrate isopentenyl (IPP) to its allylic isomer, dimethylallyl diphosphate (DMAPP). The polypeptide is Isopentenyl-diphosphate delta-isomerase (Bacillus cereus (strain AH187)).